The primary structure comprises 441 residues: Xylose isomerase (441 aa).

Catalysis depends on residues H105 and D108. Positions 236, 272, 275, 300, 311, 313, and 343 each coordinate Mg(2+).

This sequence belongs to the xylose isomerase family. As to quaternary structure, homotetramer. Mg(2+) serves as cofactor.

Its subcellular location is the cytoplasm. It catalyses the reaction alpha-D-xylose = alpha-D-xylulofuranose. The polypeptide is Xylose isomerase (Mesorhizobium japonicum (strain LMG 29417 / CECT 9101 / MAFF 303099) (Mesorhizobium loti (strain MAFF 303099))).